The primary structure comprises 407 residues: Peptidase T (407 aa).

His78 contacts Zn(2+). Asp80 is an active-site residue. Asp139 provides a ligand contact to Zn(2+). The Proton acceptor role is filled by Glu173. Residues Glu174, Asp196, and His378 each coordinate Zn(2+).

Belongs to the peptidase M20B family. The cofactor is Zn(2+).

The protein resides in the cytoplasm. The enzyme catalyses Release of the N-terminal residue from a tripeptide.. In terms of biological role, cleaves the N-terminal amino acid of tripeptides. The polypeptide is Peptidase T (Shewanella pealeana (strain ATCC 700345 / ANG-SQ1)).